Reading from the N-terminus, the 675-residue chain is Vitamin K-dependent protein S (675 aa).

An N-terminal signal peptide occupies residues 1–24 (MRVLGGRTGTLLACLALVLPVLEA). Positions 25–41 (NFLSRQHASQVLIRRRR) are excised as a propeptide. In terms of domain architecture, Gla spans 42 to 87 (ANTLLEETKKGNLERECIEELCNKEEAREIFENNPETEYFYPKYLG). 11 positions are modified to 4-carboxyglutamate: glutamate 47, glutamate 48, glutamate 55, glutamate 57, glutamate 60, glutamate 61, glutamate 66, glutamate 67, glutamate 70, glutamate 73, and glutamate 77. A disulfide bond links cysteine 58 and cysteine 63. 16 disulfide bridges follow: cysteine 88–cysteine 113, cysteine 121–cysteine 134, cysteine 126–cysteine 143, cysteine 145–cysteine 154, cysteine 161–cysteine 175, cysteine 171–cysteine 184, cysteine 186–cysteine 199, cysteine 205–cysteine 217, cysteine 212–cysteine 226, cysteine 228–cysteine 241, cysteine 247–cysteine 256, cysteine 252–cysteine 265, cysteine 267–cysteine 282, cysteine 288–cysteine 567, cysteine 449–cysteine 475, and cysteine 638–cysteine 665. The interval 88-116 (CLGSFRAGLFTAARLSTNAYPDLRSCVNA) is thrombin-sensitive. In terms of domain architecture, EGF-like 1 spans 117–155 (ISDQCNPLPCNEDGFMTCKDGQATFTCICKSGWQGEKCE). Position 136 is a (3R)-3-hydroxyaspartate (aspartate 136). The region spanning 157–200 (DINECKDPVNINGGCSQICENTPGSYHCSCKNGFVMLSNKKDCK) is the EGF-like 2; calcium-binding domain. Position 177 is a (3R)-3-hydroxyasparagine (asparagine 177). The 42-residue stretch at 201-242 (DVDECVLKPSICGTAVCKNIPGDFECECAEGYKYNPVSKSCD) folds into the EGF-like 3; calcium-binding domain. A (3R)-3-hydroxyasparagine modification is found at asparagine 219. One can recognise an EGF-like 4; calcium-binding domain in the interval 243-283 (DVDECAENLCAQLCVNYPGGYSCYCDGKKGFKLAQDQKSCE). Position 258 is a (3R)-3-hydroxyasparagine (asparagine 258). Laminin G-like domains lie at 299–475 (LLYL…NKHC) and 484–665 (YYPG…AHSC). Asparagine 499 and asparagine 509 each carry an N-linked (GlcNAc...) asparagine glycan.

In terms of processing, the iron and 2-oxoglutarate dependent 3-hydroxylation of aspartate and asparagine is (R) stereospecific within EGF domains. Plasma.

Its subcellular location is the secreted. Anticoagulant plasma protein; it is a cofactor to activated protein C in the degradation of coagulation factors Va and VIIIa. It helps to prevent coagulation and stimulating fibrinolysis. The chain is Vitamin K-dependent protein S (PROS1) from Bos taurus (Bovine).